The chain runs to 393 residues: S-adenosylmethionine synthase 3 (393 aa).

A Mg(2+)-binding site is contributed by E9. H15 is a binding site for ATP. E43 serves as a coordination point for K(+). Residues E56 and Q99 each coordinate L-methionine. ATP is bound by residues 167–169 (DGK), 235–238 (SGRF), D246, 252–253 (RK), A269, K273, and K277. D246 is a binding site for L-methionine. K277 lines the L-methionine pocket.

Belongs to the AdoMet synthase family. In terms of assembly, homotetramer. Requires Mn(2+) as cofactor. It depends on Mg(2+) as a cofactor. Co(2+) serves as cofactor. K(+) is required as a cofactor.

The protein resides in the cytoplasm. The enzyme catalyses L-methionine + ATP + H2O = S-adenosyl-L-methionine + phosphate + diphosphate. It functions in the pathway amino-acid biosynthesis; S-adenosyl-L-methionine biosynthesis; S-adenosyl-L-methionine from L-methionine: step 1/1. Catalyzes the formation of S-adenosylmethionine from methionine and ATP. The reaction comprises two steps that are both catalyzed by the same enzyme: formation of S-adenosylmethionine (AdoMet) and triphosphate, and subsequent hydrolysis of the triphosphate. This is S-adenosylmethionine synthase 3 (SAM3) from Petunia hybrida (Petunia).